A 207-amino-acid chain; its full sequence is Small ribosomal subunit protein uS4c (207 aa).

Residues 92-155 form the S4 RNA-binding domain; sequence MRLDNILFRL…TYQSILSKRI (64 aa).

The protein belongs to the universal ribosomal protein uS4 family. As to quaternary structure, part of the 30S ribosomal subunit. Contacts protein S5. The interaction surface between S4 and S5 is involved in control of translational fidelity.

It is found in the plastid. Its subcellular location is the chloroplast. One of the primary rRNA binding proteins, it binds directly to 16S rRNA where it nucleates assembly of the body of the 30S subunit. Functionally, with S5 and S12 plays an important role in translational accuracy. In Equisetum giganteum (Giant horsetail), this protein is Small ribosomal subunit protein uS4c (rps4).